We begin with the raw amino-acid sequence, 171 residues long: MISRTIRILGIDPGLRRTGWGVIDVEGNRLIFVACGTVESRESLPLSERLLAIHEGLVRVVSEHRPLEAAVEQTFVNKDGAGTLKLGQARGVAMLVPAMSGISVAEYAPNLVKKTVVGAGHADKNQIQVMLKILLPKAAPPTPDAADALAIAITHAHHRQSAMLLRKVAAL.

Catalysis depends on residues aspartate 12, glutamate 72, and aspartate 144. Residues aspartate 12, glutamate 72, and aspartate 144 each contribute to the Mg(2+) site.

It belongs to the RuvC family. In terms of assembly, homodimer which binds Holliday junction (HJ) DNA. The HJ becomes 2-fold symmetrical on binding to RuvC with unstacked arms; it has a different conformation from HJ DNA in complex with RuvA. In the full resolvosome a probable DNA-RuvA(4)-RuvB(12)-RuvC(2) complex forms which resolves the HJ. It depends on Mg(2+) as a cofactor.

The protein localises to the cytoplasm. The enzyme catalyses Endonucleolytic cleavage at a junction such as a reciprocal single-stranded crossover between two homologous DNA duplexes (Holliday junction).. In terms of biological role, the RuvA-RuvB-RuvC complex processes Holliday junction (HJ) DNA during genetic recombination and DNA repair. Endonuclease that resolves HJ intermediates. Cleaves cruciform DNA by making single-stranded nicks across the HJ at symmetrical positions within the homologous arms, yielding a 5'-phosphate and a 3'-hydroxyl group; requires a central core of homology in the junction. The consensus cleavage sequence is 5'-(A/T)TT(C/G)-3'. Cleavage occurs on the 3'-side of the TT dinucleotide at the point of strand exchange. HJ branch migration catalyzed by RuvA-RuvB allows RuvC to scan DNA until it finds its consensus sequence, where it cleaves and resolves the cruciform DNA. The chain is Crossover junction endodeoxyribonuclease RuvC from Afipia carboxidovorans (strain ATCC 49405 / DSM 1227 / KCTC 32145 / OM5) (Oligotropha carboxidovorans).